The chain runs to 298 residues: tRNA pseudouridine synthase B (298 aa).

Residue D45 is the Nucleophile of the active site.

Belongs to the pseudouridine synthase TruB family. Type 1 subfamily.

It carries out the reaction uridine(55) in tRNA = pseudouridine(55) in tRNA. Responsible for synthesis of pseudouridine from uracil-55 in the psi GC loop of transfer RNAs. In Thiobacillus denitrificans (strain ATCC 25259 / T1), this protein is tRNA pseudouridine synthase B.